Reading from the N-terminus, the 269-residue chain is Phosphatidylglycerol--prolipoprotein diacylglyceryl transferase (269 aa).

The next 7 membrane-spanning stretches (helical) occupy residues 17 to 37, 56 to 76, 92 to 112, 120 to 140, 174 to 194, 202 to 222, and 237 to 257; these read LKIH…WLLA, LVFW…VLFY, WKGG…ALWF, FFEL…AGRI, PSQL…LWLY, MAVS…VEFV, and LTMG…LIWL. Arg-139 is an a 1,2-diacyl-sn-glycero-3-phospho-(1'-sn-glycerol) binding site.

It belongs to the Lgt family.

The protein localises to the cell inner membrane. It catalyses the reaction L-cysteinyl-[prolipoprotein] + a 1,2-diacyl-sn-glycero-3-phospho-(1'-sn-glycerol) = an S-1,2-diacyl-sn-glyceryl-L-cysteinyl-[prolipoprotein] + sn-glycerol 1-phosphate + H(+). The protein operates within protein modification; lipoprotein biosynthesis (diacylglyceryl transfer). Catalyzes the transfer of the diacylglyceryl group from phosphatidylglycerol to the sulfhydryl group of the N-terminal cysteine of a prolipoprotein, the first step in the formation of mature lipoproteins. This chain is Phosphatidylglycerol--prolipoprotein diacylglyceryl transferase, found in Pseudomonas putida (strain W619).